A 143-amino-acid chain; its full sequence is Probable prefoldin subunit 2 (143 aa).

It belongs to the prefoldin subunit beta family. In terms of assembly, heterohexamer of two PFD-alpha type and four PFD-beta type subunits.

Its function is as follows. Binds specifically to cytosolic chaperonin (c-CPN) and transfers target proteins to it. Binds to nascent polypeptide chain and promotes folding in an environment in which there are many competing pathways for nonnative proteins. In Drosophila melanogaster (Fruit fly), this protein is Probable prefoldin subunit 2.